We begin with the raw amino-acid sequence, 80 residues long: Putative defensin-like protein 28 (80 aa).

Positions 1–22 (MLRANVVVSLVIFAALMQCMNG) are cleaved as a signal peptide.

This sequence belongs to the DEFL family.

The protein resides in the secreted. This is Putative defensin-like protein 28 from Arabidopsis thaliana (Mouse-ear cress).